The sequence spans 614 residues: Dihydroxy-acid dehydratase (614 aa).

Aspartate 81 is a Mg(2+) binding site. Cysteine 122 lines the [2Fe-2S] cluster pocket. Residues aspartate 123 and lysine 124 each contribute to the Mg(2+) site. N6-carboxylysine is present on lysine 124. Residue cysteine 193 coordinates [2Fe-2S] cluster. Glutamate 489 provides a ligand contact to Mg(2+). Serine 515 serves as the catalytic Proton acceptor.

The protein belongs to the IlvD/Edd family. As to quaternary structure, homodimer. Requires [2Fe-2S] cluster as cofactor. The cofactor is Mg(2+).

The catalysed reaction is (2R)-2,3-dihydroxy-3-methylbutanoate = 3-methyl-2-oxobutanoate + H2O. It catalyses the reaction (2R,3R)-2,3-dihydroxy-3-methylpentanoate = (S)-3-methyl-2-oxopentanoate + H2O. It participates in amino-acid biosynthesis; L-isoleucine biosynthesis; L-isoleucine from 2-oxobutanoate: step 3/4. Its pathway is amino-acid biosynthesis; L-valine biosynthesis; L-valine from pyruvate: step 3/4. Its function is as follows. Functions in the biosynthesis of branched-chain amino acids. Catalyzes the dehydration of (2R,3R)-2,3-dihydroxy-3-methylpentanoate (2,3-dihydroxy-3-methylvalerate) into 2-oxo-3-methylpentanoate (2-oxo-3-methylvalerate) and of (2R)-2,3-dihydroxy-3-methylbutanoate (2,3-dihydroxyisovalerate) into 2-oxo-3-methylbutanoate (2-oxoisovalerate), the penultimate precursor to L-isoleucine and L-valine, respectively. The polypeptide is Dihydroxy-acid dehydratase (Marinomonas sp. (strain MWYL1)).